The following is a 307-amino-acid chain: MEIQFLGTGAGQPSKSRNTQAIALKMLDERNEIWLFDCGEATQHQILNTTIKPRKITKIFITHLHGDHIFGLPGFLSSRSFQSSDEQTDLELYGPVGIKDFVLTALRISGSRLAYRINFHEIDSAGKIFEDDSFEVHTDLLDHTIFCLGYRVVEKNRIGELDANALKEAGLPFGPLFGKIKKGEIVQYEGKTFDPKDYIGADKAGKIVTILGDTRKSNVAVRLAYGADLLVHEATYEANESKMAKAHGHSTTKQAADVAKEAGVNRLLLTHISARYVGPLVGQLVREAQTVHSNTFVVKDFYEEKIG.

Zn(2+) contacts are provided by H63, H65, D67, H68, H143, D213, and H271. The active-site Proton acceptor is the D67.

It belongs to the RNase Z family. In terms of assembly, homodimer. Zn(2+) serves as cofactor.

It carries out the reaction Endonucleolytic cleavage of RNA, removing extra 3' nucleotides from tRNA precursor, generating 3' termini of tRNAs. A 3'-hydroxy group is left at the tRNA terminus and a 5'-phosphoryl group is left at the trailer molecule.. In terms of biological role, zinc phosphodiesterase, which displays some tRNA 3'-processing endonuclease activity. Probably involved in tRNA maturation, by removing a 3'-trailer from precursor tRNA. This chain is Ribonuclease Z, found in Lactococcus lactis subsp. lactis (strain IL1403) (Streptococcus lactis).